Here is a 194-residue protein sequence, read N- to C-terminus: Cilia- and flagella-associated protein 107 (194 aa).

2 mn regions span residues 45 to 60 (TPQSIYRKEYIPFPDH) and 95 to 107 (ISTYDDHYNRHGY).

As to quaternary structure, microtubule inner protein component of sperm flagellar doublet microtubules. In terms of tissue distribution, expressed in airway epithelial cells.

It is found in the cytoplasm. It localises to the cytoskeleton. The protein localises to the cilium axoneme. The protein resides in the flagellum axoneme. In terms of biological role, microtubule inner protein (MIP) part of the dynein-decorated doublet microtubules (DMTs) in cilia axoneme, which is required for motile cilia beating. This Homo sapiens (Human) protein is Cilia- and flagella-associated protein 107.